A 170-amino-acid polypeptide reads, in one-letter code: MNAISLVQGDITTAHVDAIVNAANPRMLGGGGVDGAIHRAAGPALINACYAVDDVDGIRCPFGDARITEAGNLNARYVIHAVGPIYDKFADPKTVLESAYQRSLDLALANHCQSVALPAISCGVYGYPPQEAAEVAMAVCQRPEYAALDMRFYLFSEEMLSIWQHALTQH.

Residues 1-170 (MNAISLVQGD…SIWQHALTQH (170 aa)) enclose the Macro domain.

The protein belongs to the MacroD-type family.

This is Macro domain-containing protein VPA0103 from Vibrio parahaemolyticus serotype O3:K6 (strain RIMD 2210633).